Reading from the N-terminus, the 881-residue chain is Nitrate reductase [NADH] 1 (881 aa).

The interval 1–46 is disordered; the sequence is MAASVEHRPFTSHQHGVVRSFKSYPDVPRPKKLPLPQPLSDSTNDN. Cys167 is a binding site for Mo-molybdopterin. A Cytochrome b5 heme-binding domain is found at 515–590; sequence TKSYSLSEVR…LEDYRIGELM (76 aa). Heme contacts are provided by His550 and His573. Residues 625–737 enclose the FAD-binding FR-type domain; it reads REKIPCKLLS…KGPLGHIEYT (113 aa). FAD contacts are provided by residues 677-680, 694-698, Phe699, Phe706, 711-713, and Thr764; these read RAYT, VVKVY, and IMS.

The protein belongs to the nitrate reductase family. As to quaternary structure, homodimer. Requires FAD as cofactor. Heme is required as a cofactor. Mo-molybdopterin serves as cofactor.

It carries out the reaction nitrite + NAD(+) + H2O = nitrate + NADH + H(+). Its function is as follows. Nitrate reductase is a key enzyme involved in the first step of nitrate assimilation in plants, fungi and bacteria. The chain is Nitrate reductase [NADH] 1 (NIA1) from Phaseolus vulgaris (Kidney bean).